A 500-amino-acid polypeptide reads, in one-letter code: L-arabinose isomerase (500 aa).

4 residues coordinate Mn(2+): E306, E333, H350, and H450.

It belongs to the arabinose isomerase family. As to quaternary structure, homohexamer. Requires Mn(2+) as cofactor.

The enzyme catalyses beta-L-arabinopyranose = L-ribulose. It functions in the pathway carbohydrate degradation; L-arabinose degradation via L-ribulose; D-xylulose 5-phosphate from L-arabinose (bacterial route): step 1/3. Its function is as follows. Catalyzes the conversion of L-arabinose to L-ribulose. The polypeptide is L-arabinose isomerase (Yersinia pseudotuberculosis serotype O:3 (strain YPIII)).